We begin with the raw amino-acid sequence, 506 residues long: Acetaldehyde dehydrogenase (506 aa).

Residues E262 and C301 contribute to the active site.

It belongs to the aldehyde dehydrogenase family.

It catalyses the reaction acetaldehyde + NAD(+) + H2O = acetate + NADH + 2 H(+). It functions in the pathway alcohol metabolism; ethanol degradation; acetate from ethanol: step 2/2. Functionally, catalyzes the NAD(+)-dependent oxidation of acetaldehyde to acetate. Is likely a component of the ethanol oxidation system that allows P.aeruginosa to grow on ethanol as the sole carbon and energy source. In Pseudomonas aeruginosa, this protein is Acetaldehyde dehydrogenase.